We begin with the raw amino-acid sequence, 366 residues long: Tudor domain-containing protein 10 (366 aa).

The RRM domain occupies 34–107; the sequence is TEVYVGNLPL…RKLFVNTSKR (74 aa). Positions 210–317 constitute a Tudor domain; it reads FWAMHVTEAL…PLTQPFMLEK (108 aa). A coiled-coil region spans residues 216-237; the sequence is TEALHQNMQALFSTLAQAEEQQ.

This is Tudor domain-containing protein 10 (TDRD10) from Homo sapiens (Human).